A 157-amino-acid chain; its full sequence is Protein Smg homolog (157 aa).

The protein belongs to the Smg family.

This Shewanella putrefaciens (strain CN-32 / ATCC BAA-453) protein is Protein Smg homolog.